We begin with the raw amino-acid sequence, 94 residues long: Large ribosomal subunit protein bL25 (94 aa).

Belongs to the bacterial ribosomal protein bL25 family. In terms of assembly, part of the 50S ribosomal subunit; part of the 5S rRNA/L5/L18/L25 subcomplex. Contacts the 5S rRNA. Binds to the 5S rRNA independently of L5 and L18.

Its function is as follows. This is one of the proteins that binds to the 5S RNA in the ribosome where it forms part of the central protuberance. This chain is Large ribosomal subunit protein bL25, found in Serratia proteamaculans (strain 568).